Consider the following 54-residue polypeptide: Hydrophobic protein RCI2A (54 aa).

Transmembrane regions (helical) follow at residues 2-22 and 32-52; these read STAT…GVFL and ICLV…IYVL.

It belongs to the UPF0057 (PMP3) family.

The protein localises to the membrane. The polypeptide is Hydrophobic protein RCI2A (RCI2A) (Arabidopsis thaliana (Mouse-ear cress)).